We begin with the raw amino-acid sequence, 195 residues long: U8 snoRNA-decapping enzyme (195 aa).

The region spanning 18–173 is the Nudix hydrolase domain; sequence DWRHACHALL…IGAAREQLLE (156 aa). Residues His-24, Arg-50, and Phe-57 each contribute to the substrate site. 4 residues coordinate Mn(2+): Gly-59, Glu-76, Glu-80, and His-99. The short motif at 61–82 is the Nudix box element; it reads FVDAQDSCLEDGLNRELREELG. Residue Gln-170 participates in substrate binding. Glu-173 lines the Mn(2+) pocket.

Belongs to the Nudix hydrolase family. NUDT16 subfamily. Homodimer. Mg(2+) serves as cofactor. Mn(2+) is required as a cofactor. Requires Co(2+) as cofactor. In terms of tissue distribution, expressed in brain, testis, spleen, lung, heart, liver, kidney and muscle (at protein level).

It is found in the nucleus. Its subcellular location is the nucleolus. The protein resides in the nucleoplasm. The protein localises to the cytoplasm. It catalyses the reaction a 5'-end (N(7)-methyl 5'-triphosphoguanosine)-ribonucleoside in mRNA + H2O = N(7)-methyl-GDP + a 5'-end phospho-ribonucleoside in mRNA + 2 H(+). The enzyme catalyses IDP + H2O = IMP + phosphate + H(+). The catalysed reaction is dIDP + H2O = dIMP + phosphate + H(+). It carries out the reaction a 5'-end NAD(+)-phospho-ribonucleoside in mRNA + H2O = a 5'-end phospho-ribonucleoside in mRNA + NAD(+) + H(+). It catalyses the reaction a 5'-end FAD-phospho-ribonucleoside in mRNA + H2O = a 5'-end phospho-adenosine-phospho-ribonucleoside in mRNA + FMN + 2 H(+). The enzyme catalyses a 5'-end CoA-ribonucleoside in mRNA + H2O = a 5'-end phospho-adenosine-phospho-ribonucleoside in mRNA + (R)-4'-phosphopantetheine + 2 H(+). RNA-binding and decapping enzyme that catalyzes the cleavage of the cap structure of snoRNAs and mRNAs in a metal-dependent manner. Part of the U8 snoRNP complex that is required for the accumulation of mature 5.8S and 28S rRNA. Has diphosphatase activity and removes m7G and/or m227G caps from U8 snoRNA and leaves a 5'monophosphate on the RNA. Also catalyzes the cleavage of the cap structure on mRNAs. Does not hydrolyze cap analog structures like 7-methylguanosine nucleoside triphosphate (m7GpppG). Also hydrolysis m7G- and m227G U3-capped RNAs but with less efficiencies. Has broad substrate specificity with manganese or cobalt as cofactor and can act on various RNA species. Binds to the U8 snoRNA; metal is not required for RNA-binding. May play a role in the regulation of snoRNAs and mRNAs degradation. Also acts as a phosphatase; hydrolyzes the non-canonical purine nucleotides inosine diphosphate (IDP) and deoxyinosine diphosphate (dITP) as well as guanosine diphosphate (GDP), deoxyguanosine diphosphate (dGDP), xanthine diphosphate (XDP), inosine triphosphate (ITP) and deoxyinosine triphosphate (ITP) to their respective monophosphate derivatives and does not distinguish between the deoxy- and ribose forms. The order of activity with different substrates is IDP &gt; dIDP &gt;&gt; GDP = dGDP &gt; XDP = ITP = dITP. Binds strongly to GTP, ITP and XTP. Participates in the hydrolysis of dIDP/IDP and probably excludes non-canonical purines from RNA and DNA precursor pools, thus preventing their incorporation into RNA and DNA and avoiding chromosomal lesions. Exhibits decapping activity towards NAD-capped RNAs and FAD-capped RNAs. Exhibits decapping activity towards dpCoA-capped RNAs in vitro. This Mus musculus (Mouse) protein is U8 snoRNA-decapping enzyme (Nudt16).